An 85-amino-acid polypeptide reads, in one-letter code: MENLIGYVAAFLTTVSFLPQVLRVVMTKQTRDISRNMYIMFFLGVVLWFVYGILRSDLPIILANVVTLFFVTIILYYKLTEGNQT.

Positions E2–P59 constitute a PQ-loop domain. 3 helical membrane-spanning segments follow: residues I5–V25, I33–I53, and D57–Y77.

In terms of assembly, homodimer.

The protein localises to the cell membrane. Its function is as follows. The homodimer mediates transmembrane sugar transport down a concentration gradient. Transport is probably effected by rocking-type movements, where a cargo-binding cavity opens first on one and then on the other side of the membrane. This is Sugar transporter SemiSWEET from Leptospira biflexa serovar Patoc (strain Patoc 1 / ATCC 23582 / Paris).